The primary structure comprises 193 residues: Guanylate kinase (193 aa).

Positions 8–188 (GRLVVLVGPS…ACEQLVSLFV (181 aa)) constitute a Guanylate kinase-like domain. ATP is bound at residue 15-22 (GPSAVGKS).

It belongs to the guanylate kinase family.

Its subcellular location is the cytoplasm. It carries out the reaction GMP + ATP = GDP + ADP. Essential for recycling GMP and indirectly, cGMP. The sequence is that of Guanylate kinase from Nocardia farcinica (strain IFM 10152).